A 206-amino-acid polypeptide reads, in one-letter code: uncharacterized protein (206 aa).

Positions 32–201 (VYIDAGHGGE…AADAIVNGID (170 aa)) constitute a MurNAc-LAA domain.

This sequence belongs to the N-acetylmuramoyl-L-alanine amidase 3 family.

This is an uncharacterized protein from Bacillus subtilis (strain 168).